The sequence spans 670 residues: DNA ligase (670 aa).

NAD(+) contacts are provided by residues 33–37, 82–83, and Glu-114; these read DAEYD and SL. Residue Lys-116 is the N6-AMP-lysine intermediate of the active site. NAD(+) is bound by residues Arg-137, Glu-174, Lys-291, and Lys-315. Positions 409, 412, 427, and 433 each coordinate Zn(2+). Positions 593–670 constitute a BRCT domain; it reads GAELPLEGKT…TEQDLLELIN (78 aa).

It belongs to the NAD-dependent DNA ligase family. LigA subfamily. The cofactor is Mg(2+). Mn(2+) is required as a cofactor.

The enzyme catalyses NAD(+) + (deoxyribonucleotide)n-3'-hydroxyl + 5'-phospho-(deoxyribonucleotide)m = (deoxyribonucleotide)n+m + AMP + beta-nicotinamide D-nucleotide.. In terms of biological role, DNA ligase that catalyzes the formation of phosphodiester linkages between 5'-phosphoryl and 3'-hydroxyl groups in double-stranded DNA using NAD as a coenzyme and as the energy source for the reaction. It is essential for DNA replication and repair of damaged DNA. The polypeptide is DNA ligase (Vibrio parahaemolyticus serotype O3:K6 (strain RIMD 2210633)).